Here is a 301-residue protein sequence, read N- to C-terminus: Epimerase family protein Mb2239 (301 aa).

Belongs to the NAD(P)-dependent epimerase/dehydratase family. SDR39U1 subfamily.

The protein is Epimerase family protein Mb2239 of Mycobacterium bovis (strain ATCC BAA-935 / AF2122/97).